A 252-amino-acid chain; its full sequence is tRNA (guanine-N(1)-)-methyltransferase (252 aa).

S-adenosyl-L-methionine-binding positions include Gly118 and 138 to 143; that span reads IGDYVL.

The protein belongs to the RNA methyltransferase TrmD family. In terms of assembly, homodimer.

The protein localises to the cytoplasm. The enzyme catalyses guanosine(37) in tRNA + S-adenosyl-L-methionine = N(1)-methylguanosine(37) in tRNA + S-adenosyl-L-homocysteine + H(+). Functionally, specifically methylates guanosine-37 in various tRNAs. In Pseudomonas paraeruginosa (strain DSM 24068 / PA7) (Pseudomonas aeruginosa (strain PA7)), this protein is tRNA (guanine-N(1)-)-methyltransferase.